Reading from the N-terminus, the 130-residue chain is Fumarate reductase subunit C (130 aa).

3 helical membrane passes run 30-50 (EGTSIPAVWFSVLLIYGVFSL), 60-80 (FVSFLQNPLVLFLNILTLFAA), and 110-130 (IKALWVVTVVASAIILAVALL).

The protein belongs to the FrdC family. As to quaternary structure, part of an enzyme complex containing four subunits: a flavoprotein (FrdA), an iron-sulfur protein (FrdB), and two hydrophobic anchor proteins (FrdC and FrdD).

The protein resides in the cell inner membrane. Two distinct, membrane-bound, FAD-containing enzymes are responsible for the catalysis of fumarate and succinate interconversion; fumarate reductase is used in anaerobic growth, and succinate dehydrogenase is used in aerobic growth. Anchors the catalytic components of the fumarate reductase complex to the cell inner membrane, binds quinones. This is Fumarate reductase subunit C from Yersinia pestis bv. Antiqua (strain Angola).